A 122-amino-acid chain; its full sequence is Large ribosomal subunit protein uL14 (122 aa).

It belongs to the universal ribosomal protein uL14 family. In terms of assembly, part of the 50S ribosomal subunit. Forms a cluster with proteins L3 and L19. In the 70S ribosome, L14 and L19 interact and together make contacts with the 16S rRNA in bridges B5 and B8.

Its function is as follows. Binds to 23S rRNA. Forms part of two intersubunit bridges in the 70S ribosome. The protein is Large ribosomal subunit protein uL14 of Nitratidesulfovibrio vulgaris (strain ATCC 29579 / DSM 644 / CCUG 34227 / NCIMB 8303 / VKM B-1760 / Hildenborough) (Desulfovibrio vulgaris).